Reading from the N-terminus, the 361-residue chain is Chorismate synthase (361 aa).

The NADP(+) site is built by R48 and R54. Residues 125-127, 240-241, G286, 301-305, and R327 contribute to the FMN site; these read RSS, NA, and KPTSS.

The protein belongs to the chorismate synthase family. Homotetramer. The cofactor is FMNH2.

The catalysed reaction is 5-O-(1-carboxyvinyl)-3-phosphoshikimate = chorismate + phosphate. The protein operates within metabolic intermediate biosynthesis; chorismate biosynthesis; chorismate from D-erythrose 4-phosphate and phosphoenolpyruvate: step 7/7. Functionally, catalyzes the anti-1,4-elimination of the C-3 phosphate and the C-6 proR hydrogen from 5-enolpyruvylshikimate-3-phosphate (EPSP) to yield chorismate, which is the branch point compound that serves as the starting substrate for the three terminal pathways of aromatic amino acid biosynthesis. This reaction introduces a second double bond into the aromatic ring system. The sequence is that of Chorismate synthase from Magnetococcus marinus (strain ATCC BAA-1437 / JCM 17883 / MC-1).